The primary structure comprises 37 residues: Large ribosomal subunit protein bL36 (37 aa).

Belongs to the bacterial ribosomal protein bL36 family.

This Treponema pallidum (strain Nichols) protein is Large ribosomal subunit protein bL36.